A 373-amino-acid polypeptide reads, in one-letter code: LIM domain-binding protein 2 (373 aa).

Disordered regions lie at residues 244 to 287 and 327 to 373; these read APPA…KTPA and QYDA…QASQ. Residues 263-280 are compositionally biased toward low complexity; it reads STSSTSNSSAGNTTNSAG. Positions 298–337 constitute an LIM interaction domain (LID) domain; that stretch reads DVMVVGEPTLMGGEFGDEDERLITRLENTQYDAANGMDDE. Polar residues predominate over residues 341–373; it reads NNSPALGNNSPWNSKPPATQETKSENAPPQASQ.

This sequence belongs to the LDB family. In terms of assembly, interacts with LHX9. Interacts with SLK; leading to negatively regulate SLK kinase activity. Interacts with LMO4. As to quaternary structure, interacts with PITX1. Interacts with LHX3. In terms of processing, ubiquitinated by RLIM/RNF12, leading to its degradation by the proteasome. As to expression, expressed in multiple tissues including heart, brain, liver, kidney, testis, lung and muscle, with expression highest in the brain, trigeminal ganglia, and lung.

The protein localises to the nucleus. Transcription cofactor. Binds to the LIM domain of a wide variety of LIM domain-containing transcription factors. In terms of biological role, regulates the transcriptional activity of LIM-containing proteins such as LHX3 or PITX1. The sequence is that of LIM domain-binding protein 2 (Ldb2) from Mus musculus (Mouse).